We begin with the raw amino-acid sequence, 377 residues long: MLEFNQSQPLTLGVELELMILNRRDYNLTRGSDDLLLQINRKPHGYDIKPEITQGMIEIGTAVHSDVNAMLDELLAIRTLLVDSAHKLNLGLAGGGAHPFQHWEDQRIYPKERYKLVSELYGYLAKQFTVYGQHIHIGCPDGDAAVRLTHYLARYIPHFIALSASSPFYQGVDTSFQTSRLTSVNAFPLSGCMPVVDSWDAFNAYFERMEALGIVASMKDFYWDIRPKPEYGTVEIRICDTPLSVETPVLLAAYAQMLARRCFEESWNDICPEPYLTYSYNRFQACRFGFDGVMVDARSKSQLGLQEDLLDTLRALEPHAEALGSQHQLAALRQRALKCHSDSRWLRQIFEQSGSLSEVVRRQSEHWMYAEPGVGVN.

The protein belongs to the glutamate--cysteine ligase type 2 family. YbdK subfamily.

It catalyses the reaction L-cysteine + L-glutamate + ATP = gamma-L-glutamyl-L-cysteine + ADP + phosphate + H(+). Functionally, ATP-dependent carboxylate-amine ligase which exhibits weak glutamate--cysteine ligase activity. The protein is Putative glutamate--cysteine ligase 2 of Chromobacterium violaceum (strain ATCC 12472 / DSM 30191 / JCM 1249 / CCUG 213 / NBRC 12614 / NCIMB 9131 / NCTC 9757 / MK).